We begin with the raw amino-acid sequence, 137 residues long: 6,7-dimethyl-8-ribityllumazine synthase (137 aa).

Residues Phe-11, 43–45 (SFD), and 67–69 (CVI) each bind 5-amino-6-(D-ribitylamino)uracil. 72-73 (DT) is a (2S)-2-hydroxy-3-oxobutyl phosphate binding site. His-75 acts as the Proton donor in catalysis. Leu-100 provides a ligand contact to 5-amino-6-(D-ribitylamino)uracil. Position 115 (Arg-115) interacts with (2S)-2-hydroxy-3-oxobutyl phosphate.

Belongs to the DMRL synthase family. As to quaternary structure, forms an icosahedral capsid composed of 60 subunits, arranged as a dodecamer of pentamers.

It catalyses the reaction (2S)-2-hydroxy-3-oxobutyl phosphate + 5-amino-6-(D-ribitylamino)uracil = 6,7-dimethyl-8-(1-D-ribityl)lumazine + phosphate + 2 H2O + H(+). Its pathway is cofactor biosynthesis; riboflavin biosynthesis; riboflavin from 2-hydroxy-3-oxobutyl phosphate and 5-amino-6-(D-ribitylamino)uracil: step 1/2. Its function is as follows. Catalyzes the formation of 6,7-dimethyl-8-ribityllumazine by condensation of 5-amino-6-(D-ribitylamino)uracil with 3,4-dihydroxy-2-butanone 4-phosphate. This is the penultimate step in the biosynthesis of riboflavin. The polypeptide is 6,7-dimethyl-8-ribityllumazine synthase (Methanococcus maripaludis (strain DSM 14266 / JCM 13030 / NBRC 101832 / S2 / LL)).